An 87-amino-acid polypeptide reads, in one-letter code: Translation initiation factor IF-1 2 (87 aa).

The region spanning Met-1–Lys-72 is the S1-like domain. Residues Arg-66–Arg-87 are disordered.

The protein belongs to the IF-1 family. In terms of assembly, component of the 30S ribosomal translation pre-initiation complex which assembles on the 30S ribosome in the order IF-2 and IF-3, IF-1 and N-formylmethionyl-tRNA(fMet); mRNA recruitment can occur at any time during PIC assembly.

The protein localises to the cytoplasm. One of the essential components for the initiation of protein synthesis. Stabilizes the binding of IF-2 and IF-3 on the 30S subunit to which N-formylmethionyl-tRNA(fMet) subsequently binds. Helps modulate mRNA selection, yielding the 30S pre-initiation complex (PIC). Upon addition of the 50S ribosomal subunit IF-1, IF-2 and IF-3 are released leaving the mature 70S translation initiation complex. The protein is Translation initiation factor IF-1 2 of Bordetella parapertussis (strain 12822 / ATCC BAA-587 / NCTC 13253).